Reading from the N-terminus, the 153-residue chain is Endoribonuclease YbeY (153 aa).

Residues His-114, His-118, and His-124 each coordinate Zn(2+).

The protein belongs to the endoribonuclease YbeY family. Zn(2+) is required as a cofactor.

It localises to the cytoplasm. Single strand-specific metallo-endoribonuclease involved in late-stage 70S ribosome quality control and in maturation of the 3' terminus of the 16S rRNA. The polypeptide is Endoribonuclease YbeY (Shewanella baltica (strain OS155 / ATCC BAA-1091)).